Reading from the N-terminus, the 657-residue chain is Archaeal Lon protease (657 aa).

At 1 to 123 (MEENIESVEE…KAEREKRDRS (123 aa)) the chain is on the cytoplasmic side. ATP is bound at residue 57 to 64 (GEPGTGKS). A helical transmembrane segment spans residues 124–144 (RSIMFVIFSVVLLGIIAAIVL). R145 is a topological domain (extracellular). The chain crosses the membrane as a helical span at residues 146 to 166 (SITLIFFAIMAAAFLYMAMAF). Residues 167 to 657 (NPVIRNERAM…ATTRAGNNAA (491 aa)) are Cytoplasmic-facing. One can recognise a Lon proteolytic domain in the interval 433-618 (GSVVGMVNGL…EDVLRVALVN (186 aa)). Residues S525 and K568 contribute to the active site.

It belongs to the peptidase S16 family. Archaeal LonB subfamily. In terms of assembly, homohexamer. Organized in a ring with a central cavity.

The protein resides in the cell membrane. Functionally, ATP-dependent serine protease that mediates the selective degradation of mutant and abnormal proteins as well as certain short-lived regulatory proteins. Degrades polypeptides processively. The sequence is that of Archaeal Lon protease from Thermoplasma acidophilum (strain ATCC 25905 / DSM 1728 / JCM 9062 / NBRC 15155 / AMRC-C165).